A 366-amino-acid polypeptide reads, in one-letter code: Peptide chain release factor 2 (366 aa).

Gln251 carries the post-translational modification N5-methylglutamine.

Belongs to the prokaryotic/mitochondrial release factor family. Methylated by PrmC. Methylation increases the termination efficiency of RF2.

The protein resides in the cytoplasm. Peptide chain release factor 2 directs the termination of translation in response to the peptide chain termination codons UGA and UAA. The polypeptide is Peptide chain release factor 2 (Campylobacter lari (strain RM2100 / D67 / ATCC BAA-1060)).